Reading from the N-terminus, the 411-residue chain is Alpha-galactosidase (411 aa).

The first 24 residues, 1 to 24 (MATHYSIIGGMIIVVLLMIIGSEG), serve as a signal peptide directing secretion. Positions 25 to 47 (GRLLEKKNRTSAEAEHYNVRRYL) are excised as a propeptide. Asparagine 32 carries N-linked (GlcNAc...) asparagine glycosylation. Residues cysteine 68 and cysteine 100 are joined by a disulfide bond. The N-linked (GlcNAc...) asparagine glycan is linked to asparagine 145. A disulfide bridge connects residues cysteine 148 and cysteine 179. Aspartate 177 serves as the catalytic Nucleophile. 210–214 (EWGWE) serves as a coordination point for substrate. Aspartate 232 acts as the Proton donor in catalysis. Asparagine 352 is a glycosylation site (N-linked (GlcNAc...) asparagine).

The protein belongs to the glycosyl hydrolase 27 family.

The catalysed reaction is Hydrolysis of terminal, non-reducing alpha-D-galactose residues in alpha-D-galactosides, including galactose oligosaccharides, galactomannans and galactolipids.. Involved in the hydrolysis of the galactomannan, it splits alpha-linked galactose moieties. It is particularly suitable for the hydrolysis of guar gum to a gum with improved gelling properties. Preferentially cleaves alpha-1,6 glycoside linkages. This is Alpha-galactosidase from Cyamopsis tetragonoloba (Guar).